The following is a 555-amino-acid chain: MPKEPETEYDPSLGRKFIFVTGGVMSGLGKGITAASTGRLLSNAGFDVTAVKIDPYLNVDAGTMNPYQHGEVYVLKDGGEVDLDLGNYERFLGEDMTSDHNVTTGKTYKHVIEKERSGDYLGKTVQIIPHITDDIKRRIREAAAGTDVCIVEVGGTVGDIEGMPYLEALRQFAHEEASENILFTHVTLVPYSKNGEQKTKPTQHSVKELRSIGLQPDILVGRCSDRLEPATKEKIALFCDVPTTAVFSNPDVDDIYHVPLVIEEEGLDQHVMERLNVAEEAITTTDRTNTWRELVTRERTSSVDVALVGKYDLEDAYMSVHEALKHAGIETQTEVTVQWVDSDEMLDHHEDRLREADGVVVPGGFGSRGIAGKLKAIEYCREHNVPFLGLCLGFQMAVVEHAQNVLGFADAHSAELQPETPHPVIDILPEQYDVETMGGTMRLGAHETNIDPNTLAAAVYNGTVCTERHRHRYEVNPEYIDKLEAGALSFSGQANNRMEILERSDHPFFLGTQFHPEFRSRPDRASPPFVSFLKSVDSTLDARSLNVSTSEEVQI.

The tract at residues 1–277 (MPKEPETEYD…DQHVMERLNV (277 aa)) is amidoligase domain. Residue serine 26 coordinates CTP. UTP is bound at residue serine 26. Position 27 to 32 (27 to 32 (GLGKGI)) interacts with ATP. An L-glutamine-binding site is contributed by tyrosine 67. Position 84 (aspartate 84) interacts with ATP. Mg(2+)-binding residues include aspartate 84 and glutamate 152. CTP contacts are provided by residues 159-161 (DIE), 198-203 (KTKPTQ), and lysine 234. UTP is bound by residues 198–203 (KTKPTQ) and lysine 234. Residues 307 to 542 (LVGKYDLEDA…LKSVDSTLDA (236 aa)) form the Glutamine amidotransferase type-1 domain. L-glutamine is bound at residue glycine 364. Cysteine 391 acts as the Nucleophile; for glutamine hydrolysis in catalysis. Residues 392-395 (LGFQ), glutamate 415, and arginine 472 contribute to the L-glutamine site. Active-site residues include histidine 515 and glutamate 517.

It belongs to the CTP synthase family. Homotetramer.

It catalyses the reaction UTP + L-glutamine + ATP + H2O = CTP + L-glutamate + ADP + phosphate + 2 H(+). The enzyme catalyses L-glutamine + H2O = L-glutamate + NH4(+). It carries out the reaction UTP + NH4(+) + ATP = CTP + ADP + phosphate + 2 H(+). Its pathway is pyrimidine metabolism; CTP biosynthesis via de novo pathway; CTP from UDP: step 2/2. Its activity is regulated as follows. Allosterically activated by GTP, when glutamine is the substrate; GTP has no effect on the reaction when ammonia is the substrate. The allosteric effector GTP functions by stabilizing the protein conformation that binds the tetrahedral intermediate(s) formed during glutamine hydrolysis. Inhibited by the product CTP, via allosteric rather than competitive inhibition. Catalyzes the ATP-dependent amination of UTP to CTP with either L-glutamine or ammonia as the source of nitrogen. Regulates intracellular CTP levels through interactions with the four ribonucleotide triphosphates. The sequence is that of CTP synthase from Haloquadratum walsbyi (strain DSM 16790 / HBSQ001).